Consider the following 399-residue polypeptide: Elongation factor Tu (399 aa).

The 195-residue stretch at 10 to 204 folds into the tr-type G domain; it reads KPHVNIGTIG…SVDESIPEPE (195 aa). The G1 stretch occupies residues 19-26; sequence GHVDHGKT. 19 to 26 provides a ligand contact to GTP; that stretch reads GHVDHGKT. Thr26 contributes to the Mg(2+) binding site. Positions 60–64 are G2; the sequence is GITIN. A G3 region spans residues 81–84; sequence DCPG. GTP contacts are provided by residues 81–85 and 136–139; these read DCPGH and NKCD. Residues 136–139 are G4; it reads NKCD. The segment at 174-176 is G5; sequence SAL.

Belongs to the TRAFAC class translation factor GTPase superfamily. Classic translation factor GTPase family. EF-Tu/EF-1A subfamily. In terms of assembly, monomer.

It is found in the cytoplasm. It catalyses the reaction GTP + H2O = GDP + phosphate + H(+). In terms of biological role, GTP hydrolase that promotes the GTP-dependent binding of aminoacyl-tRNA to the A-site of ribosomes during protein biosynthesis. The chain is Elongation factor Tu from Prochlorococcus marinus (strain MIT 9211).